Reading from the N-terminus, the 743-residue chain is Phosphoribosylformylglycinamidine synthase subunit PurL (743 aa).

The active site involves His54. 2 residues coordinate ATP: Tyr57 and Lys96. Residue Glu98 coordinates Mg(2+). Substrate-binding positions include Ser99–His102 and Arg121. Catalysis depends on His100, which acts as the Proton acceptor. Asp122 lines the Mg(2+) pocket. Gln245 lines the substrate pocket. Asp273 serves as a coordination point for Mg(2+). Glu317–Gln319 lines the substrate pocket. The ATP site is built by Asp500 and Gly537. Mg(2+) is bound at residue Asn538. Substrate is bound at residue Ser540.

It belongs to the FGAMS family. In terms of assembly, monomer. Part of the FGAM synthase complex composed of 1 PurL, 1 PurQ and 2 PurS subunits.

Its subcellular location is the cytoplasm. The enzyme catalyses N(2)-formyl-N(1)-(5-phospho-beta-D-ribosyl)glycinamide + L-glutamine + ATP + H2O = 2-formamido-N(1)-(5-O-phospho-beta-D-ribosyl)acetamidine + L-glutamate + ADP + phosphate + H(+). It participates in purine metabolism; IMP biosynthesis via de novo pathway; 5-amino-1-(5-phospho-D-ribosyl)imidazole from N(2)-formyl-N(1)-(5-phospho-D-ribosyl)glycinamide: step 1/2. In terms of biological role, part of the phosphoribosylformylglycinamidine synthase complex involved in the purines biosynthetic pathway. Catalyzes the ATP-dependent conversion of formylglycinamide ribonucleotide (FGAR) and glutamine to yield formylglycinamidine ribonucleotide (FGAM) and glutamate. The FGAM synthase complex is composed of three subunits. PurQ produces an ammonia molecule by converting glutamine to glutamate. PurL transfers the ammonia molecule to FGAR to form FGAM in an ATP-dependent manner. PurS interacts with PurQ and PurL and is thought to assist in the transfer of the ammonia molecule from PurQ to PurL. The chain is Phosphoribosylformylglycinamidine synthase subunit PurL from Bacillus pumilus (strain SAFR-032).